Reading from the N-terminus, the 481-residue chain is Bifunctional protein HldE (481 aa).

The interval Met1–Thr318 is ribokinase. Asn195–Glu198 provides a ligand contact to ATP. The active site involves Asp264. The cytidylyltransferase stretch occupies residues Met344–Val481.

This sequence in the N-terminal section; belongs to the carbohydrate kinase PfkB family. The protein in the C-terminal section; belongs to the cytidylyltransferase family. Homodimer.

The catalysed reaction is D-glycero-beta-D-manno-heptose 7-phosphate + ATP = D-glycero-beta-D-manno-heptose 1,7-bisphosphate + ADP + H(+). The enzyme catalyses D-glycero-beta-D-manno-heptose 1-phosphate + ATP + H(+) = ADP-D-glycero-beta-D-manno-heptose + diphosphate. It participates in nucleotide-sugar biosynthesis; ADP-L-glycero-beta-D-manno-heptose biosynthesis; ADP-L-glycero-beta-D-manno-heptose from D-glycero-beta-D-manno-heptose 7-phosphate: step 1/4. It functions in the pathway nucleotide-sugar biosynthesis; ADP-L-glycero-beta-D-manno-heptose biosynthesis; ADP-L-glycero-beta-D-manno-heptose from D-glycero-beta-D-manno-heptose 7-phosphate: step 3/4. Catalyzes the phosphorylation of D-glycero-D-manno-heptose 7-phosphate at the C-1 position to selectively form D-glycero-beta-D-manno-heptose-1,7-bisphosphate. Functionally, catalyzes the ADP transfer from ATP to D-glycero-beta-D-manno-heptose 1-phosphate, yielding ADP-D-glycero-beta-D-manno-heptose. This chain is Bifunctional protein HldE, found in Sodalis glossinidius (strain morsitans).